Reading from the N-terminus, the 233-residue chain is Cilia- and flagella-associated protein 299 (233 aa).

It localises to the cytoplasm. The protein resides in the nucleus. May be involved in spermatogenesis. The protein is Cilia- and flagella-associated protein 299 of Xenopus laevis (African clawed frog).